A 156-amino-acid polypeptide reads, in one-letter code: Small ribosomal subunit protein uS7 (156 aa).

Belongs to the universal ribosomal protein uS7 family. Part of the 30S ribosomal subunit. Contacts proteins S9 and S11.

Functionally, one of the primary rRNA binding proteins, it binds directly to 16S rRNA where it nucleates assembly of the head domain of the 30S subunit. Is located at the subunit interface close to the decoding center, probably blocks exit of the E-site tRNA. The chain is Small ribosomal subunit protein uS7 from Desulfovibrio desulfuricans (strain ATCC 27774 / DSM 6949 / MB).